The primary structure comprises 109 residues: Ribonuclease P protein component (109 aa).

The protein belongs to the RnpA family. In terms of assembly, consists of a catalytic RNA component (M1 or rnpB) and a protein subunit.

It carries out the reaction Endonucleolytic cleavage of RNA, removing 5'-extranucleotides from tRNA precursor.. Its function is as follows. RNaseP catalyzes the removal of the 5'-leader sequence from pre-tRNA to produce the mature 5'-terminus. It can also cleave other RNA substrates such as 4.5S RNA. The protein component plays an auxiliary but essential role in vivo by binding to the 5'-leader sequence and broadening the substrate specificity of the ribozyme. This Streptococcus agalactiae serotype III (strain NEM316) protein is Ribonuclease P protein component.